The following is a 219-amino-acid chain: Dynein light chain Tctex-type 4 (219 aa).

The tract at residues 1 to 84 (MAGRPVPAGR…RRPSLGPVPP (84 aa)) is disordered. Basic and acidic residues predominate over residues 10-20 (RQEEELAKDPG). At S64 the chain carries Phosphoserine.

The protein belongs to the dynein light chain Tctex-type family. Interacts with ENG/endoglin, TGFBR2 and TGFBR3. Interacts with PPP1CC.

It is found in the cell projection. It localises to the cilium. The protein resides in the flagellum. Its subcellular location is the cytoplasmic vesicle. The protein localises to the secretory vesicle. It is found in the acrosome. It localises to the cytoplasm. The protein resides in the cytoskeleton. Its subcellular location is the cilium axoneme. The protein localises to the nucleus. It is found in the microtubule organizing center. In Sus scrofa (Pig), this protein is Dynein light chain Tctex-type 4 (DYNLT4).